Reading from the N-terminus, the 366-residue chain is Tripartite motif-containing protein 54 (366 aa).

The segment at cysteine 26–arginine 82 adopts an RING-type zinc-finger fold. A B box-type zinc finger spans residues glutamate 121–leucine 163. Zn(2+) contacts are provided by cysteine 126, histidine 129, cysteine 149, and histidine 155. The mediates microtubule-binding and homooligomerization stretch occupies residues lysine 168–glutamine 211. The stretch at asparagine 185–glutamate 258 forms a coiled coil. The 59-residue stretch at methionine 271–glutamine 329 folds into the COS domain. The tract at residues isoleucine 326–histidine 366 is disordered. Over residues glycine 334 to glutamate 347 the composition is skewed to acidic residues. The segment covering glutamate 353–histidine 366 has biased composition (basic and acidic residues).

In terms of assembly, homooligomer and heterooligomer. Interacts with TRIM63 and probably with TRIM55. Interacts with tubulin.

It localises to the cytoplasm. The protein localises to the cytoskeleton. Its subcellular location is the myofibril. It is found in the sarcomere. The protein resides in the z line. Functionally, may bind and stabilize microtubules during myotubes formation. The chain is Tripartite motif-containing protein 54 (TRIM54) from Bos taurus (Bovine).